Consider the following 86-residue polypeptide: Protein Tat (86 aa).

The interaction with human CREBBP stretch occupies residues 1–24; that stretch reads MDPVDPNQEPWNHPGSQPRTACNN. The tract at residues 1–48 is transactivation; it reads MDPVDPNQEPWNHPGSQPRTACNNCYCKKCCYHCQLCFLKKGLGIYYG. Zn(2+)-binding residues include Cys-22, Cys-25, and Cys-27. The cysteine-rich stretch occupies residues 22 to 37; the sequence is CNNCYCKKCCYHCQLC. Lys-28 is subject to N6-acetyllysine; by host PCAF. Zn(2+) contacts are provided by Cys-30, His-33, Cys-34, and Cys-37. Residues 38-48 are core; sequence FLKKGLGIYYG. A compositionally biased stretch (basic residues) spans 48 to 58; it reads GRKKRRQRRGT. Positions 48–86 are disordered; the sequence is GRKKRRQRRGTPKSLQDHQTLIPKQPLSRTSGDPTGPEK. The Nuclear localization signal, RNA-binding (TAR), and protein transduction motif lies at 49 to 57; sequence RKKRRQRRG. The segment at 49–86 is interaction with the host capping enzyme RNGTT; the sequence is RKKRRQRRGTPKSLQDHQTLIPKQPLSRTSGDPTGPEK. 2 positions are modified to N6-acetyllysine; by host EP300 and GCN5L2: Lys-50 and Lys-51. Residues Arg-52 and Arg-53 each carry the asymmetric dimethylarginine; by host PRMT6 modification. A Glycyl lysine isopeptide (Lys-Gly) (interchain with G-Cter in ubiquitin) cross-link involves residue Lys-71.

It belongs to the lentiviruses Tat family. Interacts with host CCNT1. Associates with the P-TEFb complex composed at least of Tat, P-TEFb (CDK9 and CCNT1), TAR RNA, RNA Pol II. Recruits the HATs CREBBP, TAF1/TFIID, EP300, PCAF and GCN5L2. Interacts with host KAT5/Tip60; this interaction targets the latter to degradation. Interacts with the host deacetylase SIRT1. Interacts with host capping enzyme RNGTT; this interaction stimulates RNGTT. Binds to host KDR, and to the host integrins ITGAV/ITGB3 and ITGA5/ITGB1. Interacts with host KPNB1/importin beta-1 without previous binding to KPNA1/importin alpha-1. Interacts with EIF2AK2. Interacts with host nucleosome assembly protein NAP1L1; this interaction may be required for the transport of Tat within the nucleus, since the two proteins interact at the nuclear rim. Interacts with host C1QBP/SF2P32; this interaction involves lysine-acetylated Tat. Interacts with the host chemokine receptors CCR2, CCR3 and CXCR4. Interacts with host DPP4/CD26; this interaction may trigger an anti-proliferative effect. Interacts with host LDLR. Interacts with the host extracellular matrix metalloproteinase MMP1. Interacts with host PRMT6; this interaction mediates Tat's methylation. Interacts with, and is ubiquitinated by MDM2/Hdm2. Interacts with host PSMC3 and HTATIP2. Interacts with STAB1; this interaction may overcome SATB1-mediated repression of IL2 and IL2RA (interleukin) in T cells by binding to the same domain than HDAC1. Interacts (when acetylated) with human CDK13, thereby increasing HIV-1 mRNA splicing and promoting the production of the doubly spliced HIV-1 protein Nef. Interacts with host TBP; this interaction modulates the activity of transcriptional pre-initiation complex. Interacts with host RELA. Interacts with host PLSCR1; this interaction negatively regulates Tat transactivation activity by altering its subcellular distribution. Asymmetrical arginine methylation by host PRMT6 seems to diminish the transactivation capacity of Tat and affects the interaction with host CCNT1. In terms of processing, acetylation by EP300, CREBBP, GCN5L2/GCN5 and PCAF regulates the transactivation activity of Tat. EP300-mediated acetylation of Lys-50 promotes dissociation of Tat from the TAR RNA through the competitive binding to PCAF's bromodomain. In addition, the non-acetylated Tat's N-terminus can also interact with PCAF. PCAF-mediated acetylation of Lys-28 enhances Tat's binding to CCNT1. Lys-50 is deacetylated by SIRT1. Post-translationally, polyubiquitination by host MDM2 does not target Tat to degradation, but activates its transactivation function and fosters interaction with CCNT1 and TAR RNA. Phosphorylated by EIF2AK2 on serine and threonine residues adjacent to the basic region important for TAR RNA binding and function. Phosphorylation of Tat by EIF2AK2 is dependent on the prior activation of EIF2AK2 by dsRNA.

It is found in the host nucleus. It localises to the host nucleolus. The protein localises to the host cytoplasm. Its subcellular location is the secreted. Transcriptional activator that increases RNA Pol II processivity, thereby increasing the level of full-length viral transcripts. Recognizes a hairpin structure at the 5'-LTR of the nascent viral mRNAs referred to as the transactivation responsive RNA element (TAR) and recruits the cyclin T1-CDK9 complex (P-TEFb complex) that will in turn hyperphosphorylate the RNA polymerase II to allow efficient elongation. The CDK9 component of P-TEFb and other Tat-activated kinases hyperphosphorylate the C-terminus of RNA Pol II that becomes stabilized and much more processive. Other factors such as HTATSF1/Tat-SF1, SUPT5H/SPT5, and HTATIP2 are also important for Tat's function. Besides its effect on RNA Pol II processivity, Tat induces chromatin remodeling of proviral genes by recruiting the histone acetyltransferases (HATs) CREBBP, EP300 and PCAF to the chromatin. This also contributes to the increase in proviral transcription rate, especially when the provirus integrates in transcriptionally silent region of the host genome. To ensure maximal activation of the LTR, Tat mediates nuclear translocation of NF-kappa-B by interacting with host RELA. Through its interaction with host TBP, Tat may also modulate transcription initiation. Tat can reactivate a latently infected cell by penetrating in it and transactivating its LTR promoter. In the cytoplasm, Tat is thought to act as a translational activator of HIV-1 mRNAs. In terms of biological role, extracellular circulating Tat can be endocytosed by surrounding uninfected cells via the binding to several surface receptors such as CD26, CXCR4, heparan sulfate proteoglycans (HSPG) or LDLR. Neurons are rarely infected, but they internalize Tat via their LDLR. Through its interaction with nuclear HATs, Tat is potentially able to control the acetylation-dependent cellular gene expression. Modulates the expression of many cellular genes involved in cell survival, proliferation or in coding for cytokines or cytokine receptors. Tat plays a role in T-cell and neurons apoptosis. Tat induced neurotoxicity and apoptosis probably contribute to neuroAIDS. Circulating Tat also acts as a chemokine-like and/or growth factor-like molecule that binds to specific receptors on the surface of the cells, affecting many cellular pathways. In the vascular system, Tat binds to ITGAV/ITGB3 and ITGA5/ITGB1 integrins dimers at the surface of endothelial cells and competes with bFGF for heparin-binding sites, leading to an excess of soluble bFGF. The sequence is that of Protein Tat from Human immunodeficiency virus type 1 group M subtype H (isolate VI991) (HIV-1).